Reading from the N-terminus, the 465-residue chain is Type II restriction enzyme BsuMI component YdjA (465 aa).

As to quaternary structure, bsuMI restriction activity requires YdiR, YdiS and YdjA.

The enzyme catalyses Endonucleolytic cleavage of DNA to give specific double-stranded fragments with terminal 5'-phosphates.. In terms of biological role, a P subtype restriction enzyme that recognizes the double-stranded sequence 5'-CTCGAG-3'; the cleavage site is unknown. The polypeptide is Type II restriction enzyme BsuMI component YdjA (ydjA) (Bacillus subtilis (strain 168)).